The following is a 500-amino-acid chain: NAD(P)H-quinone oxidoreductase chain 4, chloroplastic (500 aa).

The next 14 helical transmembrane spans lie at 4–24 (FPWLTLIVVLPISAGSLIFFL), 37–57 (IFICMLELLLTTYVFCYHFQL), 87–107 (IGPILLTGFITTLATLAAWPV), 113–130 (LFHFLMLAMYSGQIGSFS), 134–154 (LLLFFIMWELELIPVYLLLSM), 167–187 (FILYTAGGSIFLLLGVLGIGL), 208–228 (ALEIIFYIGFFIAFAVKSPII), 242–262 (HYSTCMLLAGILLKMGAYGLV), 272–292 (AHSIFSPWLVVVGTMQIIYAA), 305–325 (IAYSSVSHMGFIIIGIGSITD), 330–350 (GAILQIISHGFLGAALFFLAG), 386–406 (LALPGMSGFVAELIVFFGIIT), 416–436 (ILITFVMAIGMILTPIYSLSM), and 462–482 (LFVLISIFLPVIGIGIYPDFV).

Belongs to the complex I subunit 4 family.

The protein localises to the plastid. It is found in the chloroplast thylakoid membrane. It carries out the reaction a plastoquinone + NADH + (n+1) H(+)(in) = a plastoquinol + NAD(+) + n H(+)(out). The catalysed reaction is a plastoquinone + NADPH + (n+1) H(+)(in) = a plastoquinol + NADP(+) + n H(+)(out). This chain is NAD(P)H-quinone oxidoreductase chain 4, chloroplastic, found in Vitis vinifera (Grape).